The sequence spans 469 residues: Ribosomal protein uS12 methylthiotransferase RimO (469 aa).

Residues 17–132 (PRVGFVSLGC…VMDAVHLNLP (116 aa)) form the MTTase N-terminal domain. 6 residues coordinate [4Fe-4S] cluster: Cys-26, Cys-62, Cys-91, Cys-167, Cys-171, and Cys-174. The region spanning 153–395 (LTPKHYAYLK…AVAEEVSSLK (243 aa)) is the Radical SAM core domain. The region spanning 397 to 469 (QQRVGATMQV…QGHDLVAIPV (73 aa)) is the TRAM domain.

It belongs to the methylthiotransferase family. RimO subfamily. [4Fe-4S] cluster is required as a cofactor.

It is found in the cytoplasm. The enzyme catalyses L-aspartate(89)-[ribosomal protein uS12]-hydrogen + (sulfur carrier)-SH + AH2 + 2 S-adenosyl-L-methionine = 3-methylsulfanyl-L-aspartate(89)-[ribosomal protein uS12]-hydrogen + (sulfur carrier)-H + 5'-deoxyadenosine + L-methionine + A + S-adenosyl-L-homocysteine + 2 H(+). In terms of biological role, catalyzes the methylthiolation of an aspartic acid residue of ribosomal protein uS12. The protein is Ribosomal protein uS12 methylthiotransferase RimO of Polaromonas sp. (strain JS666 / ATCC BAA-500).